The following is a 230-amino-acid chain: Uracil-DNA glycosylase (230 aa).

Asp70 acts as the Proton acceptor in catalysis.

Belongs to the uracil-DNA glycosylase (UDG) superfamily. UNG family.

The protein resides in the cytoplasm. The enzyme catalyses Hydrolyzes single-stranded DNA or mismatched double-stranded DNA and polynucleotides, releasing free uracil.. Its function is as follows. Excises uracil residues from the DNA which can arise as a result of misincorporation of dUMP residues by DNA polymerase or due to deamination of cytosine. This is Uracil-DNA glycosylase from Pseudomonas savastanoi pv. phaseolicola (strain 1448A / Race 6) (Pseudomonas syringae pv. phaseolicola (strain 1448A / Race 6)).